Consider the following 617-residue polypeptide: Protein fem-1 homolog C (617 aa).

At M1 the chain carries N-acetylmethionine. 7 ANK repeats span residues 2–31 (DLKT…KEEV), 40–70 (NGAT…SIEV), 82–111 (EGAP…SVNN), 115–144 (TNST…DLEV), 148–177 (HGHT…DVNR), 181–210 (KGNT…KMEK), and 213–242 (YGMT…TSKT). 2 TPR repeats span residues 245–279 (INAL…RYSD) and 338–371 (SYYI…QQNN). ANK repeat units lie at residues 481–523 (NNFS…DVNV) and 527–556 (DDNS…HFDA).

The protein belongs to the fem-1 family. In terms of assembly, component of a CRL2 E3 ubiquitin-protein ligase complex, also named ECS (Elongin BC-CUL2/5-SOCS-box protein) complex, composed of CUL2, Elongin BC (ELOB and ELOC), RBX1 and substrate-specific adapter FEM1C.

The protein operates within protein modification; protein ubiquitination. Functionally, substrate-recognition component of a Cul2-RING (CRL2) E3 ubiquitin-protein ligase complex of the DesCEND (destruction via C-end degrons) pathway, which recognizes a C-degron located at the extreme C terminus of target proteins, leading to their ubiquitination and degradation. The C-degron recognized by the DesCEND pathway is usually a motif of less than ten residues and can be present in full-length proteins, truncated proteins or proteolytically cleaved forms. The CRL2(FEM1C) complex specifically recognizes proteins with an arginine at the C-terminus: recognizes and binds proteins ending with -Lys/Arg-Xaa-Arg and -Lys/Arg-Xaa-Xaa-Arg C-degrons, such as SIL1 or OR51B2, leading to their ubiquitination and degradation. The CRL2(FEM1C) complex mediates ubiquitination and degradation of truncated MSRB1/SEPX1 selenoproteins produced by failed UGA/Sec decoding. The polypeptide is Protein fem-1 homolog C (Bos taurus (Bovine)).